The sequence spans 185 residues: MINEIKKDAQARMKKSLESLEHAFAKIRTGRAHPSILDGVMVSYYGADTPLRQVANVVAEDARTLALTVFDKSMIQAVEKAIMTSDLGLNPATAGTTIRVPMPALTEETRKGYTRQARAEAESARVAVRNIRRDALAQLKDLVKEKEISEDEERRAADEVQKLTDKAIAEVDKALEAKEADLMAV.

The protein belongs to the RRF family.

It localises to the cytoplasm. Its function is as follows. Responsible for the release of ribosomes from messenger RNA at the termination of protein biosynthesis. May increase the efficiency of translation by recycling ribosomes from one round of translation to another. The protein is Ribosome-recycling factor of Azotobacter vinelandii (strain DJ / ATCC BAA-1303).